The following is a 285-amino-acid chain: 4-hydroxybenzoate octaprenyltransferase (285 aa).

The next 9 helical transmembrane spans lie at 19–39, 42–62, 82–102, 104–124, 136–156, 166–186, 210–230, 233–253, and 265–285; these read IGSL…ADGL, WHVL…GCVI, LPSG…LVVC, FLLV…GIVL, YLPQ…AYAA, WLLF…YAMV, IIGL…SQLA, GIYY…QWLI, and FLNN…SVLI.

The protein belongs to the UbiA prenyltransferase family. Mg(2+) serves as cofactor.

Its subcellular location is the cell inner membrane. The enzyme catalyses all-trans-octaprenyl diphosphate + 4-hydroxybenzoate = 4-hydroxy-3-(all-trans-octaprenyl)benzoate + diphosphate. It participates in cofactor biosynthesis; ubiquinone biosynthesis. Its function is as follows. Catalyzes the prenylation of para-hydroxybenzoate (PHB) with an all-trans polyprenyl group. Mediates the second step in the final reaction sequence of ubiquinone-8 (UQ-8) biosynthesis, which is the condensation of the polyisoprenoid side chain with PHB, generating the first membrane-bound Q intermediate 3-octaprenyl-4-hydroxybenzoate. This chain is 4-hydroxybenzoate octaprenyltransferase, found in Aliivibrio fischeri (strain ATCC 700601 / ES114) (Vibrio fischeri).